A 514-amino-acid polypeptide reads, in one-letter code: Peptide chain release factor 3 (514 aa).

The region spanning 8–268 (KKRRTFAIIS…TFLEFAPEPH (261 aa)) is the tr-type G domain. Residues 17 to 24 (SHPDAGKT), 85 to 89 (DTPGH), and 139 to 142 (NKLD) each bind GTP.

This sequence belongs to the TRAFAC class translation factor GTPase superfamily. Classic translation factor GTPase family. PrfC subfamily.

The protein localises to the cytoplasm. Increases the formation of ribosomal termination complexes and stimulates activities of RF-1 and RF-2. It binds guanine nucleotides and has strong preference for UGA stop codons. It may interact directly with the ribosome. The stimulation of RF-1 and RF-2 is significantly reduced by GTP and GDP, but not by GMP. In Streptococcus pyogenes serotype M5 (strain Manfredo), this protein is Peptide chain release factor 3.